We begin with the raw amino-acid sequence, 820 residues long: Leucine--tRNA ligase (820 aa).

A 'HIGH' region motif is present at residues 42 to 52; sequence PYPSGDLHMGH. The 'KMSKS' region signature appears at 576-580; the sequence is KMSKS. Lys-579 is an ATP binding site.

It belongs to the class-I aminoacyl-tRNA synthetase family.

It is found in the cytoplasm. It catalyses the reaction tRNA(Leu) + L-leucine + ATP = L-leucyl-tRNA(Leu) + AMP + diphosphate. This chain is Leucine--tRNA ligase, found in Coxiella burnetii (strain CbuG_Q212) (Coxiella burnetii (strain Q212)).